Consider the following 346-residue polypeptide: 4-hydroxy-2-oxovalerate aldolase 2 (346 aa).

Residues 8-258 (VTLVDTTLRD…HTGVELFPLI (251 aa)) form the Pyruvate carboxyltransferase domain. Residues 16–17 (RD), Ser170, and His197 each bind substrate. Asp17 contributes to the Mn(2+) binding site. The Mn(2+) site is built by His197 and His199. Tyr288 contacts substrate.

It belongs to the 4-hydroxy-2-oxovalerate aldolase family.

It carries out the reaction (S)-4-hydroxy-2-oxopentanoate = acetaldehyde + pyruvate. This Nocardia farcinica (strain IFM 10152) protein is 4-hydroxy-2-oxovalerate aldolase 2.